The primary structure comprises 151 residues: SsrA-binding protein (151 aa).

A disordered region spans residues 131–151 (KRESIKEKDWKRDQSRLIRQK).

It belongs to the SmpB family.

The protein localises to the cytoplasm. Functionally, required for rescue of stalled ribosomes mediated by trans-translation. Binds to transfer-messenger RNA (tmRNA), required for stable association of tmRNA with ribosomes. tmRNA and SmpB together mimic tRNA shape, replacing the anticodon stem-loop with SmpB. tmRNA is encoded by the ssrA gene; the 2 termini fold to resemble tRNA(Ala) and it encodes a 'tag peptide', a short internal open reading frame. During trans-translation Ala-aminoacylated tmRNA acts like a tRNA, entering the A-site of stalled ribosomes, displacing the stalled mRNA. The ribosome then switches to translate the ORF on the tmRNA; the nascent peptide is terminated with the 'tag peptide' encoded by the tmRNA and targeted for degradation. The ribosome is freed to recommence translation, which seems to be the essential function of trans-translation. This chain is SsrA-binding protein, found in Rickettsia bellii (strain OSU 85-389).